The sequence spans 185 residues: Monothiol glutaredoxin-S4, mitochondrial (185 aa).

Residues 1-36 (MARLMSSALIRGLVRSSCSPTVAAVAQPTIHQFRNY) constitute a mitochondrion transit peptide. The disordered stretch occupies residues 37–74 (SSGLGGDSTATGDSSSTRVAADPDTHQDFQPTTKSSNM). The span at 43-53 (DSTATGDSSST) shows a compositional bias: low complexity. A compositionally biased stretch (polar residues) spans 64–74 (DFQPTTKSSNM). One can recognise a Glutaredoxin domain in the interval 77–179 (DDIVSQDIKE…DVLGDIAQKR (103 aa)). Lysine 94 serves as a coordination point for glutathione. Cysteine 102 contributes to the [2Fe-2S] cluster binding site. Glutathione contacts are provided by residues lysine 131, phenylalanine 143, and 156 to 157 (SD).

The protein belongs to the glutaredoxin family. CGFS subfamily.

The protein resides in the mitochondrion. May only reduce GSH-thiol disulfides, but not protein disulfides. The protein is Monothiol glutaredoxin-S4, mitochondrial (GRXS4) of Oryza sativa subsp. japonica (Rice).